The sequence spans 616 residues: Chaperone protein HtpG (616 aa).

An a; substrate-binding region spans residues 1–333 (MKKQFDTEVN…CQDLPLNVSR (333 aa)). The segment at 334-542 (EILQQNKILS…SNDPTYQMQK (209 aa)) is b. Residues 543–616 (IMLSMGQEVK…INEFLEKELL (74 aa)) are c.

This sequence belongs to the heat shock protein 90 family. Homodimer.

It localises to the cytoplasm. In terms of biological role, molecular chaperone. Has ATPase activity. The chain is Chaperone protein HtpG from Borrelia garinii subsp. bavariensis (strain ATCC BAA-2496 / DSM 23469 / PBi) (Borreliella bavariensis).